Consider the following 108-residue polypeptide: MAGMKIKKGDTVQIVTGKDRGLKGKVIRAIPDQNKVVVEGANRVTRHTRVQQSSRGSQSGGIVTQEAPIHVSNVMIVDPSDGRPTRVGYRFNDDGTKVRISRRTGAEL.

The segment at 46–65 (RHTRVQQSSRGSQSGGIVTQ) is disordered. Low complexity predominate over residues 51–61 (QQSSRGSQSGG).

Belongs to the universal ribosomal protein uL24 family. In terms of assembly, part of the 50S ribosomal subunit.

Functionally, one of two assembly initiator proteins, it binds directly to the 5'-end of the 23S rRNA, where it nucleates assembly of the 50S subunit. One of the proteins that surrounds the polypeptide exit tunnel on the outside of the subunit. This is Large ribosomal subunit protein uL24 from Parafrankia sp. (strain EAN1pec).